The chain runs to 462 residues: Threonine--tRNA ligase, mitochondrial (462 aa).

A mitochondrion-targeting transit peptide spans 1-45 (MKIQLVRWHCSRNALWNRAFYSTRKATKNASSATPATMTSMVSQR).

It belongs to the class-II aminoacyl-tRNA synthetase family.

It localises to the mitochondrion matrix. The catalysed reaction is tRNA(Thr) + L-threonine + ATP = L-threonyl-tRNA(Thr) + AMP + diphosphate + H(+). This Saccharomyces cerevisiae (strain ATCC 204508 / S288c) (Baker's yeast) protein is Threonine--tRNA ligase, mitochondrial (MST1).